A 158-amino-acid polypeptide reads, in one-letter code: 6,7-dimethyl-8-ribityllumazine synthase (158 aa).

5-amino-6-(D-ribitylamino)uracil-binding positions include Trp27, 58–60 (SFE), and 81–83 (VII). Residue 86–87 (GT) participates in (2S)-2-hydroxy-3-oxobutyl phosphate binding. The active-site Proton donor is the His89. Phe114 lines the 5-amino-6-(D-ribitylamino)uracil pocket. Arg128 is a binding site for (2S)-2-hydroxy-3-oxobutyl phosphate.

It belongs to the DMRL synthase family.

It catalyses the reaction (2S)-2-hydroxy-3-oxobutyl phosphate + 5-amino-6-(D-ribitylamino)uracil = 6,7-dimethyl-8-(1-D-ribityl)lumazine + phosphate + 2 H2O + H(+). Its pathway is cofactor biosynthesis; riboflavin biosynthesis; riboflavin from 2-hydroxy-3-oxobutyl phosphate and 5-amino-6-(D-ribitylamino)uracil: step 1/2. Catalyzes the formation of 6,7-dimethyl-8-ribityllumazine by condensation of 5-amino-6-(D-ribitylamino)uracil with 3,4-dihydroxy-2-butanone 4-phosphate. This is the penultimate step in the biosynthesis of riboflavin. This chain is 6,7-dimethyl-8-ribityllumazine synthase, found in Leifsonia xyli subsp. xyli (strain CTCB07).